Here is a 192-residue protein sequence, read N- to C-terminus: Thymidylate kinase (192 aa).

7–14 (GVDGVGKS) contributes to the ATP binding site.

It belongs to the thymidylate kinase family.

It catalyses the reaction dTMP + ATP = dTDP + ADP. In terms of biological role, phosphorylation of dTMP to form dTDP in both de novo and salvage pathways of dTTP synthesis. This chain is Thymidylate kinase, found in Campylobacter fetus subsp. fetus (strain 82-40).